The following is a 220-amino-acid chain: Large ribosomal subunit protein uL3 (220 aa).

The tract at residues 126 to 158 (GFQGAIKRHGQSRGPMSHGSRYHRRPGSMGMAS) is disordered.

This sequence belongs to the universal ribosomal protein uL3 family. As to quaternary structure, part of the 50S ribosomal subunit. Forms a cluster with proteins L14 and L19.

One of the primary rRNA binding proteins, it binds directly near the 3'-end of the 23S rRNA, where it nucleates assembly of the 50S subunit. The protein is Large ribosomal subunit protein uL3 of Macrococcus caseolyticus (strain JCSC5402) (Macrococcoides caseolyticum).